Reading from the N-terminus, the 199-residue chain is Pyridoxal 5'-phosphate synthase subunit PdxT (199 aa).

Residue 49–51 (GES) participates in L-glutamine binding. Cys-81 (nucleophile) is an active-site residue. L-glutamine is bound by residues Arg-110 and 139–140 (IR). Residues His-175 and Glu-177 each act as charge relay system in the active site.

It belongs to the glutaminase PdxT/SNO family. As to quaternary structure, in the presence of PdxS, forms a dodecamer of heterodimers. Only shows activity in the heterodimer.

The catalysed reaction is aldehydo-D-ribose 5-phosphate + D-glyceraldehyde 3-phosphate + L-glutamine = pyridoxal 5'-phosphate + L-glutamate + phosphate + 3 H2O + H(+). It carries out the reaction L-glutamine + H2O = L-glutamate + NH4(+). It functions in the pathway cofactor biosynthesis; pyridoxal 5'-phosphate biosynthesis. Functionally, catalyzes the hydrolysis of glutamine to glutamate and ammonia as part of the biosynthesis of pyridoxal 5'-phosphate. The resulting ammonia molecule is channeled to the active site of PdxS. The sequence is that of Pyridoxal 5'-phosphate synthase subunit PdxT from Frankia alni (strain DSM 45986 / CECT 9034 / ACN14a).